The primary structure comprises 604 residues: Dopamine receptor 3 (604 aa).

The Extracellular portion of the chain corresponds to 1–23 (MLTGQHHIPGIESPLMVVLWRVA). A helical transmembrane segment spans residues 24-44 (AGVFLPLVPTMAVFGNVLVIL). Over 45–58 (SVYRERNLQTVTNM) the chain is Cytoplasmic. The chain crosses the membrane as a helical span at residues 59 to 79 (LIVSLAVSDLFVAIGVMSFGV). The Extracellular portion of the chain corresponds to 80-96 (YYEWNGFKWGLGSFFCH). A disulfide bridge connects residues C95 and C170. A helical membrane pass occupies residues 97 to 117 (VYQALDVACSTASILNLLAIS). The Cytoplasmic portion of the chain corresponds to 118–141 (LDRYIAIGHPISYAQYGARGGRAM). Residues 142–162 (ISITIVWGVSCAVALPLLLGV) traverse the membrane as a helical segment. At 163–179 (NPMENDQCELANPWFNM) the chain is on the extracellular side. Residues 180-200 (ISSIFSFFIPCIAMIILYTII) form a helical membrane-spanning segment. Topologically, residues 201 to 520 (FRRLRQRERA…TKQMRREHKA (320 aa)) are cytoplasmic. The segment at 399 to 430 (SIQDEKKMNSRPPENPFAHQNGTNKQRLLPNP) is disordered. A helical transmembrane segment spans residues 521-541 (TVTLAVVLAVFLFCWLPFFIL). Residues 542–559 (HLSNSICLVIDSNSDCIG) lie on the Extracellular side of the membrane. A helical transmembrane segment spans residues 560–580 (FLPLYLATWLGYLNSSLNPLI). The Cytoplasmic portion of the chain corresponds to 581–604 (YTVFDQRFRNAFRNILSCGFFKKR).

This sequence belongs to the G-protein coupled receptor 1 family.

Its subcellular location is the cell membrane. Its function is as follows. Receptor for dopamine. The activity of this receptor is mediated by G proteins which activate adenylyl cyclase. In terms of antagonist responses, would be classed with the D2-like dopamine receptor group. Mediates the effect of dopamine on the inhibition of locomotion. Acts as an antagonist of dop-1. In Caenorhabditis briggsae, this protein is Dopamine receptor 3.